The following is a 1333-amino-acid chain: DNA-directed RNA polymerase subunit beta' (1333 aa).

Residues Cys60, Cys62, Cys75, and Cys78 each coordinate Zn(2+). Positions 535, 537, and 539 each coordinate Mg(2+). Positions 901, 983, 990, and 993 each coordinate Zn(2+).

The protein belongs to the RNA polymerase beta' chain family. As to quaternary structure, the RNAP catalytic core consists of 2 alpha, 1 beta, 1 beta' and 1 omega subunit. When a sigma factor is associated with the core the holoenzyme is formed, which can initiate transcription. The cofactor is Mg(2+). Zn(2+) is required as a cofactor.

It carries out the reaction RNA(n) + a ribonucleoside 5'-triphosphate = RNA(n+1) + diphosphate. Functionally, DNA-dependent RNA polymerase catalyzes the transcription of DNA into RNA using the four ribonucleoside triphosphates as substrates. In Corynebacterium efficiens (strain DSM 44549 / YS-314 / AJ 12310 / JCM 11189 / NBRC 100395), this protein is DNA-directed RNA polymerase subunit beta'.